We begin with the raw amino-acid sequence, 228 residues long: PKHD-type hydroxylase XC_1340 (228 aa).

The region spanning 78–180 (RIYPPLFNRY…RVASFFWIQS (103 aa)) is the Fe2OG dioxygenase domain. Fe cation is bound by residues H96, D98, and H161. Residue R171 participates in 2-oxoglutarate binding.

The cofactor is Fe(2+). L-ascorbate serves as cofactor.

This is PKHD-type hydroxylase XC_1340 from Xanthomonas campestris pv. campestris (strain 8004).